Consider the following 275-residue polypeptide: Large ribosomal subunit protein uL2c (275 aa).

Disordered stretches follow at residues serine 32 to histidine 53 and proline 218 to glycine 242.

Belongs to the universal ribosomal protein uL2 family. Part of the 50S ribosomal subunit.

It is found in the plastid. It localises to the chloroplast. The chain is Large ribosomal subunit protein uL2c (rpl2) from Tetradesmus obliquus (Green alga).